Reading from the N-terminus, the 322-residue chain is Protein lin-56 (322 aa).

The segment at 264–322 (SSQKLQQNGFPEKVEQMDKYSNKLKDEASDKKYEKPGKKDYVEEEGYWAPITDSEDDEA) is disordered. The span at 275–304 (EKVEQMDKYSNKLKDEASDKKYEKPGKKDY) shows a compositional bias: basic and acidic residues.

In terms of tissue distribution, widely expressed throughout embryonic development. Expressed in the six multipotent ventral ectodermal blast cells, P3.p-P8.p, which generate the vulva and in their descendants throughout vulval development.

It localises to the nucleus. In terms of biological role, required for translation, stability and/or localization of lin-15a. The polypeptide is Protein lin-56 (lin-56) (Caenorhabditis elegans).